The following is a 103-amino-acid chain: Large ribosomal subunit protein bL21 (103 aa).

This sequence belongs to the bacterial ribosomal protein bL21 family. As to quaternary structure, part of the 50S ribosomal subunit. Contacts protein L20.

Functionally, this protein binds to 23S rRNA in the presence of protein L20. The sequence is that of Large ribosomal subunit protein bL21 from Shigella sonnei (strain Ss046).